The following is a 238-amino-acid chain: Protein A47 (238 aa).

The protein belongs to the orthopoxvirus A47 protein family.

The sequence is that of Protein A47 from Vaccinia virus (strain Ankara) (VACV).